Reading from the N-terminus, the 177-residue chain is Endoribonuclease YbeY (177 aa).

Residues His142, His146, and His152 each coordinate Zn(2+).

Belongs to the endoribonuclease YbeY family. Requires Zn(2+) as cofactor.

The protein resides in the cytoplasm. In terms of biological role, single strand-specific metallo-endoribonuclease involved in late-stage 70S ribosome quality control and in maturation of the 3' terminus of the 16S rRNA. This chain is Endoribonuclease YbeY, found in Synechococcus sp. (strain CC9311).